Reading from the N-terminus, the 206-residue chain is MELKLLNDQGQAASNVAAPDTIFGRDYNEALIHQVVVAYQANARSGNRKQKDREEVHHTTKKPWRQKGTGRARAGMSSSPLWRGGGRIFPNSPDENFSHKVNKKMYRAGVCSILSQLAREGRLSVIENLSVEAPKTKLLSQKLKGMGLDSVLVITDSLDENLLLASRNLPNVLICEPRHADPVSLVFYKKILITKLALAKIEEMLA.

A disordered region spans residues Ala43–Ser78. A compositionally biased stretch (basic and acidic residues) spans Lys49–His58. The span at Thr59–Gly70 shows a compositional bias: basic residues.

The protein belongs to the universal ribosomal protein uL4 family. As to quaternary structure, part of the 50S ribosomal subunit.

In terms of biological role, one of the primary rRNA binding proteins, this protein initially binds near the 5'-end of the 23S rRNA. It is important during the early stages of 50S assembly. It makes multiple contacts with different domains of the 23S rRNA in the assembled 50S subunit and ribosome. Functionally, forms part of the polypeptide exit tunnel. The polypeptide is Large ribosomal subunit protein uL4 (Janthinobacterium sp. (strain Marseille) (Minibacterium massiliensis)).